A 264-amino-acid chain; its full sequence is Outer kinetochore KNL1 complex subunit sos7 (264 aa).

Residues 90 to 236 are a coiled coil; sequence EAEDNEKLET…SNQIKAAIHT (147 aa).

The protein belongs to the KRE28 family. Component of the KNL1/SPC105 complex composed of at least spc7 and sos7. Part of the outer kinetochore KMN network that includes the KNL1, MIS12 and NDC80 complexes. Interacts (via C-terminus) with spc7 (via C-terminus); the interaction is direct.

The protein localises to the nucleus. Its subcellular location is the chromosome. The protein resides in the centromere. It is found in the kinetochore. Functionally, acts as a component of the outer kinetochore KNL1 complex that facilitates microtubule-kinetochore interactions and the spindle assembly checkpoint. Kinetochores, consisting of a centromere-associated inner segment and a microtubule-contacting outer segment, play a crucial role in chromosome segregation by mediating the physical connection between centromeric DNA and spindle microtubules. The outer kinetochore is made up of the ten-subunit KMN network, comprising the MIS12, NDC80 and KNL1 complexes, and auxiliary microtubule-associated components; together they connect the outer kinetochore with the inner kinetochore, bind microtubules, and mediate interactions with mitotic checkpoint proteins that delay anaphase until chromosomes are bioriented on the spindle. The sequence is that of Outer kinetochore KNL1 complex subunit sos7 (sos7) from Schizosaccharomyces pombe (strain 972 / ATCC 24843) (Fission yeast).